A 286-amino-acid chain; its full sequence is Expansin-B4 (286 aa).

An N-terminal signal peptide occupies residues 1–24; that stretch reads MGSLSSLAAAAVFLSLLAVGHCAA. N-linked (GlcNAc...) asparagine glycans are attached at residues Asn-28 and Asn-44. The region spanning 75–181 is the Expansin-like EG45 domain; it reads GGACGFKHTN…TRVPCEFPGL (107 aa). Cystine bridges form between Cys-78–Cys-106, Cys-109–Cys-176, and Cys-114–Cys-120. Positions 194–281 constitute an Expansin-like CBD domain; that stretch reads VYFAVLVEYE…NWRPNTFYRS (88 aa). N-linked (GlcNAc...) asparagine glycosylation is present at Asn-257.

The protein belongs to the expansin family. Expansin B subfamily. As to expression, expressed in internodes.

The protein localises to the secreted. It localises to the cell wall. It is found in the membrane. In terms of biological role, may cause loosening and extension of plant cell walls by disrupting non-covalent bonding between cellulose microfibrils and matrix glucans. No enzymatic activity has been found. May be required for rapid internodal elongation in deepwater rice during submergence. This is Expansin-B4 (EXPB4) from Oryza sativa subsp. japonica (Rice).